The primary structure comprises 509 residues: Maturase K (509 aa).

The protein belongs to the intron maturase 2 family. MatK subfamily.

It localises to the plastid. Its subcellular location is the chloroplast. In terms of biological role, usually encoded in the trnK tRNA gene intron. Probably assists in splicing its own and other chloroplast group II introns. The protein is Maturase K of Clematis lasiantha (Pipestem clematis).